Consider the following 182-residue polypeptide: ATP synthase subunit delta (182 aa).

The protein belongs to the ATPase delta chain family. In terms of assembly, F-type ATPases have 2 components, F(1) - the catalytic core - and F(0) - the membrane proton channel. F(1) has five subunits: alpha(3), beta(3), gamma(1), delta(1), epsilon(1). CF(0) has four main subunits: a(1), b(1), b'(1) and c(10-14). The alpha and beta chains form an alternating ring which encloses part of the gamma chain. F(1) is attached to F(0) by a central stalk formed by the gamma and epsilon chains, while a peripheral stalk is formed by the delta, b and b' chains.

It is found in the cellular thylakoid membrane. Functionally, f(1)F(0) ATP synthase produces ATP from ADP in the presence of a proton or sodium gradient. F-type ATPases consist of two structural domains, F(1) containing the extramembraneous catalytic core and F(0) containing the membrane proton channel, linked together by a central stalk and a peripheral stalk. During catalysis, ATP synthesis in the catalytic domain of F(1) is coupled via a rotary mechanism of the central stalk subunits to proton translocation. This protein is part of the stalk that links CF(0) to CF(1). It either transmits conformational changes from CF(0) to CF(1) or is implicated in proton conduction. This chain is ATP synthase subunit delta, found in Trichodesmium erythraeum (strain IMS101).